A 919-amino-acid chain; its full sequence is 2-oxoadipate dehydrogenase complex component E1 (919 aa).

N6-succinyllysine is present on residues K183 and K188. The disordered stretch occupies residues 299–320 (GKTRGRQQSRQDGDYSPDNSAQ). K800 and K818 each carry N6-succinyllysine.

It belongs to the alpha-ketoglutarate dehydrogenase family. The 2-oxoadipate dehydrogenase complex is composed of OADH (2-oxoadipate dehydrogenase; E1a), DLST (dihydrolipoamide succinyltransferase; E2) and DLD (dihydrolipoamide dehydrogenase; E3). E1a functional unit is a dimer. Interacts with DLST. The cofactor is thiamine diphosphate.

Its subcellular location is the mitochondrion. It carries out the reaction N(6)-[(R)-lipoyl]-L-lysyl-[protein] + 2-oxoadipate + H(+) = N(6)-[(R)-S(8)-glutaryldihydrolipoyl]-L-lysyl-[protein] + CO2. The protein operates within amino-acid degradation. Its function is as follows. 2-oxoadipate dehydrogenase (E1a) component of the 2-oxoadipate dehydrogenase complex (OADHC). Participates in the first step, rate limiting for the overall conversion of 2-oxoadipate (alpha-ketoadipate) to glutaryl-CoA and CO(2) catalyzed by the whole OADHC. Catalyzes the irreversible decarboxylation of 2-oxoadipate via the thiamine diphosphate (ThDP) cofactor and subsequent transfer of the decarboxylated acyl intermediate on an oxidized dihydrolipoyl group that is covalently amidated to the E2 enzyme (dihydrolipoyllysine-residue succinyltransferase or DLST). Can catalyze the decarboxylation of 2-oxoglutarate in vitro, but at a much lower rate than 2-oxoadipate. Responsible for the last step of L-lysine, L-hydroxylysine and L-tryptophan catabolism with the common product being 2-oxoadipate. In Homo sapiens (Human), this protein is 2-oxoadipate dehydrogenase complex component E1 (DHTKD1).